A 328-amino-acid polypeptide reads, in one-letter code: MPKRPVLAVTAGEPAGIGPDLVLRLPELAPEARCVAIADHALLADRAAALGLNLELADYRRDRPAPAGALEVLHVPLAAPAQAGRLDPANGRYVLATLDAAIDGCVSGEFAAMVTAPVHKGVINDAGVPFTGHTEYLAERTGTGKVVMMLAGGGMRVALATTHLPLREVADAITAPLLNEVIRILHADLENKFGIDAPRILVAGLNPHAGEGGHMGREEIDVIEPALDALRAEGINLIGPLPADTLFNPDKLAAADAVLAMYHDQGLPVLKHASFGAGINVTLGLPIVRTSVDHGTALDLAGSGRADPGSLLEAVRLAEQLAGHAGRR.

The substrate site is built by H133 and T134. Positions 163, 208, and 263 each coordinate a divalent metal cation. Substrate is bound by residues K271, N280, and R289.

This sequence belongs to the PdxA family. In terms of assembly, homodimer. Zn(2+) serves as cofactor. Mg(2+) is required as a cofactor. It depends on Co(2+) as a cofactor.

It is found in the cytoplasm. The catalysed reaction is 4-(phosphooxy)-L-threonine + NAD(+) = 3-amino-2-oxopropyl phosphate + CO2 + NADH. It participates in cofactor biosynthesis; pyridoxine 5'-phosphate biosynthesis; pyridoxine 5'-phosphate from D-erythrose 4-phosphate: step 4/5. Catalyzes the NAD(P)-dependent oxidation of 4-(phosphooxy)-L-threonine (HTP) into 2-amino-3-oxo-4-(phosphooxy)butyric acid which spontaneously decarboxylates to form 3-amino-2-oxopropyl phosphate (AHAP). This Chromobacterium violaceum (strain ATCC 12472 / DSM 30191 / JCM 1249 / CCUG 213 / NBRC 12614 / NCIMB 9131 / NCTC 9757 / MK) protein is 4-hydroxythreonine-4-phosphate dehydrogenase.